The sequence spans 460 residues: tRNA modification GTPase MnmE (460 aa).

3 residues coordinate (6S)-5-formyl-5,6,7,8-tetrahydrofolate: arginine 29, glutamate 86, and lysine 126. Residues 222-383 (GMRVVIAGRP…LAEHLKECMG (162 aa)) form the TrmE-type G domain. Asparagine 232 contributes to the K(+) binding site. GTP contacts are provided by residues 232–237 (NAGKSS), 251–257 (TAIAGTT), 276–279 (DTAG), and 341–344 (NKAD). Serine 236 contributes to the Mg(2+) binding site. K(+) is bound by residues threonine 251, isoleucine 253, and threonine 256. Residue threonine 257 participates in Mg(2+) binding. Lysine 460 contacts (6S)-5-formyl-5,6,7,8-tetrahydrofolate.

It belongs to the TRAFAC class TrmE-Era-EngA-EngB-Septin-like GTPase superfamily. TrmE GTPase family. In terms of assembly, homodimer. Heterotetramer of two MnmE and two MnmG subunits. Requires K(+) as cofactor.

Its subcellular location is the cytoplasm. In terms of biological role, exhibits a very high intrinsic GTPase hydrolysis rate. Involved in the addition of a carboxymethylaminomethyl (cmnm) group at the wobble position (U34) of certain tRNAs, forming tRNA-cmnm(5)s(2)U34. This Pseudoalteromonas atlantica (strain T6c / ATCC BAA-1087) protein is tRNA modification GTPase MnmE.